Here is a 395-residue protein sequence, read N- to C-terminus: Mannan polymerase complexes subunit MNN9 (395 aa).

At 2 to 17 the chain is on the cytoplasmic side; the sequence is SLSLVSYRLRKNPWVN. The helical; Signal-anchor for type II membrane protein transmembrane segment at 18–33 threads the bilayer; the sequence is IFLPVLAIFLIYIIFF. The Lumenal segment spans residues 34–395; sequence QRDQSLLGLN…LVYHIEEENH (362 aa).

This sequence belongs to the ANP1/MMN9/VAN1 family. In terms of assembly, the M-Pol I complex contains MNN9 and VAN1. The M-Pol II complex is composed of ANP1, MNN9, MNN10, MNN11 and HOC1.

It is found in the endoplasmic reticulum membrane. Its subcellular location is the golgi apparatus membrane. It participates in protein modification; protein glycosylation. Functionally, the M-Pol I and M-Pol II complexes possess alpha-1,6-mannosyltransferase activity and are probably involved in the elongation of the mannan backbone of N-linked glycans on cell wall and periplasmic proteins. May also provide alpha-1,2-mannosyltransferase activity to the M-Pol I complex. The sequence is that of Mannan polymerase complexes subunit MNN9 (MNN9) from Saccharomyces cerevisiae (strain ATCC 204508 / S288c) (Baker's yeast).